Reading from the N-terminus, the 115-residue chain is UPF0102 protein Swol_1475 (115 aa).

The protein belongs to the UPF0102 family.

This is UPF0102 protein Swol_1475 from Syntrophomonas wolfei subsp. wolfei (strain DSM 2245B / Goettingen).